The following is a 259-amino-acid chain: Exosome complex component Rrp42 (259 aa).

Belongs to the RNase PH family. Rrp42 subfamily. Component of the archaeal exosome complex. Forms a hexameric ring-like arrangement composed of 3 Rrp41-Rrp42 heterodimers. The hexameric ring associates with a trimer of Rrp4 and/or Csl4 subunits.

Its subcellular location is the cytoplasm. Non-catalytic component of the exosome, which is a complex involved in RNA degradation. Contributes to the structuring of the Rrp41 active site. This chain is Exosome complex component Rrp42, found in Archaeoglobus fulgidus (strain ATCC 49558 / DSM 4304 / JCM 9628 / NBRC 100126 / VC-16).